The chain runs to 313 residues: Methionyl-tRNA formyltransferase (313 aa).

109-112 (SLLP) lines the (6S)-5,6,7,8-tetrahydrofolate pocket.

This sequence belongs to the Fmt family.

It carries out the reaction L-methionyl-tRNA(fMet) + (6R)-10-formyltetrahydrofolate = N-formyl-L-methionyl-tRNA(fMet) + (6S)-5,6,7,8-tetrahydrofolate + H(+). In terms of biological role, attaches a formyl group to the free amino group of methionyl-tRNA(fMet). The formyl group appears to play a dual role in the initiator identity of N-formylmethionyl-tRNA by promoting its recognition by IF2 and preventing the misappropriation of this tRNA by the elongation apparatus. The chain is Methionyl-tRNA formyltransferase from Thermotoga neapolitana (strain ATCC 49049 / DSM 4359 / NBRC 107923 / NS-E).